The sequence spans 229 residues: uncharacterized protein (229 aa).

Residues 61 to 229 (MQAEDKVSKP…TESEDKPKRG (169 aa)) are disordered. A compositionally biased stretch (basic and acidic residues) spans 109-128 (QQEKQQPEKAVVEQQEKQQP). Low complexity predominate over residues 166 to 194 (QPEQPERQQQAQPERQQQAQPERQQQAQP). Residues 195 to 204 (EEAEDAEQEP) show a composition bias toward acidic residues. Residues 218-229 (TQTESEDKPKRG) are compositionally biased toward basic and acidic residues.

This is an uncharacterized protein from Frog virus 3 (isolate Goorha) (FV-3).